A 449-amino-acid polypeptide reads, in one-letter code: BPI fold-containing family B member 6 (449 aa).

Positions methionine 1–alanine 18 are cleaved as a signal peptide. Asparagine 115 carries N-linked (GlcNAc...) asparagine glycosylation. Cysteine 138 and cysteine 172 are oxidised to a cystine.

The protein belongs to the BPI/LBP/Plunc superfamily. BPI/LBP family.

It is found in the secreted. The protein is BPI fold-containing family B member 6 (Bpifb6) of Mus musculus (Mouse).